The chain runs to 163 residues: Putative pre-16S rRNA nuclease (163 aa).

This sequence belongs to the YqgF nuclease family.

It localises to the cytoplasm. Its function is as follows. Could be a nuclease involved in processing of the 5'-end of pre-16S rRNA. This chain is Putative pre-16S rRNA nuclease, found in Rhodopseudomonas palustris (strain BisB18).